Here is a 764-residue protein sequence, read N- to C-terminus: Zygote defective protein 12 (764 aa).

Polar residues predominate over residues M1–A20. Residues M1–R33 form a disordered region. The interaction with dli-1 stretch occupies residues M1–G236. The Calponin-homology (CH) domain occupies R43 to Q169. Coiled-coil stretches lie at residues L244–T405 and G436–I692. Residues A732 to I752 form a helical membrane-spanning segment.

The protein belongs to the hook family. As to quaternary structure, homodimer. Interacts with the dynein subunit dli-1 via its N-terminus. May interact with microtubules.

The protein localises to the nucleus membrane. It is found in the cytoplasm. It localises to the cytoskeleton. Its subcellular location is the microtubule organizing center. The protein resides in the centrosome. Its function is as follows. Cytoskeletal linker protein, which is essential for attachment of the centrosome to the nucleus. Required for dynein localization to the nuclear envelope. The protein is Zygote defective protein 12 (zyg-12) of Caenorhabditis briggsae.